Reading from the N-terminus, the 154-residue chain is SsrA-binding protein (154 aa).

It belongs to the SmpB family.

It is found in the cytoplasm. Required for rescue of stalled ribosomes mediated by trans-translation. Binds to transfer-messenger RNA (tmRNA), required for stable association of tmRNA with ribosomes. tmRNA and SmpB together mimic tRNA shape, replacing the anticodon stem-loop with SmpB. tmRNA is encoded by the ssrA gene; the 2 termini fold to resemble tRNA(Ala) and it encodes a 'tag peptide', a short internal open reading frame. During trans-translation Ala-aminoacylated tmRNA acts like a tRNA, entering the A-site of stalled ribosomes, displacing the stalled mRNA. The ribosome then switches to translate the ORF on the tmRNA; the nascent peptide is terminated with the 'tag peptide' encoded by the tmRNA and targeted for degradation. The ribosome is freed to recommence translation, which seems to be the essential function of trans-translation. The sequence is that of SsrA-binding protein from Methylobacillus flagellatus (strain ATCC 51484 / DSM 6875 / VKM B-1610 / KT).